A 574-amino-acid chain; its full sequence is DNA-directed primase/polymerase protein (574 aa).

Residues 2–22 (KRKWEERVKKVEELASYYERN) adopt a coiled-coil conformation. Substrate-binding positions include Arg76, 116–118 (DLE), 167–171 (KFSRH), 291–294 (RNFR), and Lys300. Mn(2+) is bound by residues Asp116 and Glu118. Zn(2+) is bound by residues Cys424, His431, Cys451, and Cys456. The Zinc knuckle motif motif lies at 424 to 457 (CENIGRAHRSNNIMILVDLKKEVWYQKCHDPVCR).

It belongs to the eukaryotic-type primase small subunit family. Requires Mn(2+) as cofactor.

Its subcellular location is the nucleus. The protein resides in the mitochondrion matrix. It is found in the chromosome. The catalysed reaction is ssDNA + n NTP = ssDNA/pppN(pN)n-1 hybrid + (n-1) diphosphate.. The enzyme catalyses DNA(n) + a 2'-deoxyribonucleoside 5'-triphosphate = DNA(n+1) + diphosphate. In terms of biological role, DNA primase and DNA polymerase required to tolerate replication-stalling lesions by bypassing them. Required to facilitate mitochondrial and nuclear replication fork progression by initiating de novo DNA synthesis using dNTPs and acting as an error-prone DNA polymerase able to bypass certain DNA lesions. Shows a high capacity to tolerate DNA damage lesions such as 8oxoG and abasic sites in DNA. Provides different translesion synthesis alternatives when DNA replication is stalled: able to synthesize DNA primers downstream of lesions, such as UV lesions, R-loops and G-quadruplexes, to allow DNA replication to continue. Can also realign primers ahead of 'unreadable lesions' such as abasic sites and 6-4 photoproduct (6-4 pyrimidine-pyrimidinone), thereby skipping the lesion. Repriming avoids fork degradation while leading to accumulation of internal ssDNA gaps behind the forks. Also able to incorporate nucleotides opposite DNA lesions such as 8oxoG, like a regular translesion synthesis DNA polymerase. Also required for reinitiating stalled forks after ultraviolet (UV) damage during nuclear DNA replication. Required for mitochondrial DNA (mtDNA) synthesis and replication, by reinitiating synthesis after UV damage or in the presence of chain-terminating nucleotides. In addition to its role in DNA damage response, also required to maintain efficient nuclear and mitochondrial DNA replication in unperturbed cells. This is DNA-directed primase/polymerase protein from Gallus gallus (Chicken).